A 238-amino-acid polypeptide reads, in one-letter code: Androgen-induced gene 1 protein (238 aa).

The Cytoplasmic segment spans residues Met1–Ala12. A helical transmembrane segment spans residues Ile13 to Pro30. At Ser31–Phe44 the chain is on the extracellular side. Residues Ile45–Thr67 form a helical membrane-spanning segment. Topologically, residues Arg68–Asp87 are cytoplasmic. The helical transmembrane segment at Trp88–Ala110 threads the bilayer. Residues Tyr111–Phe124 are Extracellular-facing. A helical membrane pass occupies residues Ile125–Glu144. Residues Met145–Ser156 are Cytoplasmic-facing. Residues Ser157–Val179 traverse the membrane as a helical segment. The Extracellular segment spans residues Thr180–Pro193. The helical transmembrane segment at Gly194 to Val216 threads the bilayer. Over Leu217–Glu238 the chain is Cytoplasmic.

It belongs to the AIG1 family. As to expression, highly expressed in heart, ovary, testis, liver, and kidney, at lower levels in spleen, prostate, brain, skeletal muscle, pancreas, small intestine and colon, and undetected in peripheral blood leukocytes, thymus, lung and placenta. AIG1 expression is higher in hair follicles from males than from females.

The protein resides in the cell membrane. It carries out the reaction 9-hexadecanoyloxy-octadecanoate + H2O = 9-hydroxy-octadecanoate + hexadecanoate + H(+). The enzyme catalyses 12-hexadecanoyloxy-octadecanoate + H2O = 12-hydroxyoctadecanoate + hexadecanoate + H(+). The catalysed reaction is 9-(9Z-hexadecenoyloxy)-octadecanoate + H2O = (9Z)-hexadecenoate + 9-hydroxy-octadecanoate + H(+). It catalyses the reaction 12-(9Z-hexadecenoyloxy)-octadecanoate + H2O = 12-hydroxyoctadecanoate + (9Z)-hexadecenoate + H(+). It carries out the reaction 13-(9Z-hexadecenoyloxy)-octadecanoate + H2O = 13-hydroxy-octadecanoate + (9Z)-hexadecenoate + H(+). The enzyme catalyses 9-octadecanoyloxy-octadecanoate + H2O = 9-hydroxy-octadecanoate + octadecanoate + H(+). The catalysed reaction is 12-octadecanoyloxy-octadecanoate + H2O = 12-hydroxyoctadecanoate + octadecanoate + H(+). It catalyses the reaction 13-octadecanoyloxy-octadecanoate + H2O = 13-hydroxy-octadecanoate + octadecanoate + H(+). It carries out the reaction 9-(9Z-octadecenoyloxy)-octadecanoate + H2O = 9-hydroxy-octadecanoate + (9Z)-octadecenoate + H(+). The enzyme catalyses 12-(9Z-octadecenoyloxy)-octadecanoate + H2O = 12-hydroxyoctadecanoate + (9Z)-octadecenoate + H(+). The catalysed reaction is 13-(9Z-octadecenoyloxy)-octadecanoate + H2O = 13-hydroxy-octadecanoate + (9Z)-octadecenoate + H(+). It catalyses the reaction 5-(9Z-hexadecenoyloxy)-octadecanoate + H2O = 5-hydroxy-octadecanoate + (9Z)-hexadecenoate + H(+). Its activity is regulated as follows. Inhibited by N-hydroxyhydantoin carbamate JJH260 and beta-lactone KC01. Hydrolyzes bioactive fatty-acid esters of hydroxy-fatty acids (FAHFAs), but not other major classes of lipids. Show a preference for FAHFAs with branching distal from the carboxylate head group of the lipids. The protein is Androgen-induced gene 1 protein (AIG1) of Homo sapiens (Human).